Reading from the N-terminus, the 580-residue chain is Small conductance calcium-activated potassium channel protein 2 (580 aa).

Disordered regions lie at residues 1–68 (MSSC…VSKP) and 88–116 (GGGGGGGGGGGGSGHGSSSGTKSSKKKNQ). Positions 48–61 (SSPSAAAAASSSAP) are enriched in low complexity. Residues 88–104 (GGGGGGGGGGGGSGHGS) show a composition bias toward gly residues. The helical transmembrane segment at 140-160 (LIFGMFGIVVMVIETELSWGA) threads the bilayer. Tyr161 carries the phosphotyrosine modification. Residues 169-189 (LALKCLISLSTIILLGLIIVY) form a helical membrane-spanning segment. A helical transmembrane segment spans residues 215-235 (IFFICLEILVCAIHPIPGNYT). Residues 257 to 277 (IILSIPMFLRLYLIARVMLLH) traverse the membrane as a helical segment. The chain crosses the membrane as a helical span at residues 306-326 (LMTICPGTVLLVFSISLWIIA). Positions 346 to 366 (FLGAMWLISITFLSIGYGDMV) form an intramembrane region, pore-forming. The chain crosses the membrane as a helical span at residues 375–395 (VCLLTGIMGAGCTALVVAVVA). Residues 413–489 (DTQLTKRVKN…LVDLAKTQNI (77 aa)) are calmodulin-binding. A compositionally biased stretch (basic and acidic residues) spans 551–560 (HVTYNAERSR). Positions 551 to 580 (HVTYNAERSRSSSRRRRSSSTAPPTSSESS) are disordered. The segment covering 569–580 (SSTAPPTSSESS) has biased composition (low complexity).

Belongs to the potassium channel KCNN family. KCa2.2/KCNN2 subfamily. As to quaternary structure, homodimer. Heteromultimer with KCNN1 and KCNN3. The complex is composed of 4 channel subunits each of which binds to a calmodulin subunit which regulates the channel activity through calcium-binding. Interacts (via N-terminal domain) with MPP2. Brain.

The protein resides in the membrane. Its subcellular location is the cytoplasm. The protein localises to the myofibril. It is found in the sarcomere. It localises to the z line. It catalyses the reaction K(+)(in) = K(+)(out). With respect to regulation, inhibited by bee venom neurotoxin apamin. Inhibited by UCL 1684 and tetraethylammonium (TEA). Small conductance calcium-activated potassium channel that mediates the voltage-independent transmembrane transfer of potassium across the cell membrane through a constitutive interaction with calmodulin which binds the intracellular calcium allowing its opening. The current is characterized by a voltage-independent activation, an intracellular calcium concentration increase-dependent activation and a single-channel conductance of about 3 picosiemens. Also presents an inwardly rectifying current, thus reducing its already small outward conductance of potassium ions, which is particularly the case when the membrane potential displays positive values, above + 20 mV. The inward rectification could be due to a blockade of the outward current by intracellular divalent cations such as calcium and magnesium and could also be due to an intrinsic property of the channel pore, independent of intracellular divalent ions. There are three positively charged amino acids in the S6 transmembrane domain, close to the pore, that collectively control the conductance and rectification through an electrostatic mechanism. Additionally, electrostatic contributions from these residues also play an important role in determining the intrinsic open probability of the channel in the absence of calcium, affecting the apparent calcium affinity for activation. Forms an heteromeric complex with calmodulin, which is constitutively associated in a calcium-independent manner. Channel opening is triggered when calcium binds the calmodulin resulting in a rotary movement leading to the formation of the dimeric complex to open the gate. Plays a role in the repolarization phase of cardiac action potential. This chain is Small conductance calcium-activated potassium channel protein 2, found in Rattus norvegicus (Rat).